We begin with the raw amino-acid sequence, 668 residues long: Probable potassium transport system protein Kup (668 aa).

The next 12 helical transmembrane spans lie at 17–37, 59–79, 104–124, 148–168, 175–195, 221–241, 256–276, 299–319, 350–370, 380–400, 403–423, and 430–450; these read GILV…LYVM, VSLI…VIAL, IIPA…TPAV, TIIV…QRFG, AFGP…LMNF, LGLF…ALYS, PYIK…LLTV, ILVF…QALI, MYIP…VLAF, YGLS…FYLL, IPAW…VVFF, and FFHG…IMII.

The protein belongs to the HAK/KUP transporter (TC 2.A.72) family.

The protein resides in the cell membrane. The catalysed reaction is K(+)(in) + H(+)(in) = K(+)(out) + H(+)(out). Its function is as follows. Transport of potassium into the cell. Likely operates as a K(+):H(+) symporter. The chain is Probable potassium transport system protein Kup from Enterococcus faecalis (strain ATCC 700802 / V583).